The sequence spans 493 residues: F(420)H(2) dehydrogenase subunit N (493 aa).

14 helical membrane passes run 7 to 27, 34 to 54, 78 to 98, 107 to 127, 130 to 150, 165 to 185, 205 to 225, 244 to 264, 273 to 293, 310 to 330, 333 to 353, 381 to 401, 404 to 424, and 454 to 474; these read LAPE…GVFL, ILGY…VKSF, LSQF…IASI, TEEF…VASA, LILL…LAGF, FVIG…VYGA, PIGI…MALV, ALLA…VFII, WQFM…VVAV, AGYI…GGIM, LAHA…VWMI, ALCM…AGFM, FVLF…IAIL, and IPFP…VMGL.

The protein belongs to the complex I subunit 2 family. As to quaternary structure, the FPO complex is composed of at least 13 different subunits. FpoA, FpoH, FpoJ, FpoK, FpoL, FpoM and FpoN proteins constitute the membrane sector of the complex.

It localises to the cell membrane. It catalyses the reaction methanophenazine + reduced coenzyme F420-(gamma-L-Glu)(n) = dihydromethanophenazine + oxidized coenzyme F420-(gamma-L-Glu)(n) + H(+). In terms of biological role, component of the F(420)H(2) dehydrogenase (FPO complex) which is part of the energy-conserving F(420)H(2):heterodisulfide oxidoreductase system. The membrane-bound electron transfer system of the complex plays an important role in the metabolism of methylotrophic methanogens when the organisms grow on methanol or methylamines. Catalyzes the oxidation of methanophenazine to dihydromethanophenazine. It shuttles electrons from F(420)H(2), via FAD and iron-sulfur (Fe-S) centers, to methanophenazine (an electron carrier in the membrane). It couples the redox reaction to proton translocation (for every two electrons transferred, two hydrogen ions are translocated across the cytoplasmic membrane), and thus conserves the redox energy in a proton gradient. It also catalyzes the oxidation of F(420)H(2) with quinones such as 2,3-dimethyl-1,4-naphthoquinone, 2-methyl-1,4-naphthoquinone and tetramethyl-p-benzoquinone. This chain is F(420)H(2) dehydrogenase subunit N (fpoN), found in Methanosarcina mazei (strain ATCC BAA-159 / DSM 3647 / Goe1 / Go1 / JCM 11833 / OCM 88) (Methanosarcina frisia).